A 247-amino-acid chain; its full sequence is ATP synthase subunit a, chloroplastic (247 aa).

Helical transmembrane passes span 38-58 (QVLI…AIAV), 95-115 (VPFI…GALL), 134-154 (INTT…AGLT), 199-219 (LVVV…VMFL), and 220-240 (GLFT…AYIG).

Belongs to the ATPase A chain family. In terms of assembly, F-type ATPases have 2 components, CF(1) - the catalytic core - and CF(0) - the membrane proton channel. CF(1) has five subunits: alpha(3), beta(3), gamma(1), delta(1), epsilon(1). CF(0) has four main subunits: a, b, b' and c.

The protein localises to the plastid. The protein resides in the chloroplast thylakoid membrane. Functionally, key component of the proton channel; it plays a direct role in the translocation of protons across the membrane. The protein is ATP synthase subunit a, chloroplastic of Ceratophyllum demersum (Rigid hornwort).